The primary structure comprises 1077 residues: ATP-dependent DNA helicase MPH1 (1077 aa).

Positions 99–266 (IVHRALFENV…EVVDNLQISK (168 aa)) constitute a Helicase ATP-binding domain. 112 to 119 (IPTGMGKT) is an ATP binding site. Residues 214-217 (DEAH) carry the DEAH box motif. The Helicase C-terminal domain occupies 511–660 (KKVDRIRRLE…SLNYKVTDRI (150 aa)). Disordered stretches follow at residues 536 to 556 (EKLA…ISGM) and 831 to 859 (TLSS…PKRQ). Polar residues predominate over residues 831-841 (TLSSDNKSTPD).

Belongs to the DEAD box helicase family. DEAH subfamily. FANCM sub-subfamily. Interacts with the MHF histone-fold complex to form the FANCM-MHF complex.

The protein resides in the nucleus. The catalysed reaction is ATP + H2O = ADP + phosphate + H(+). ATP-dependent DNA helicase involved in DNA damage repair by homologous recombination and in genome maintenance. Capable of unwinding D-loops. Plays a role in limiting crossover recombinants during mitotic DNA double-strand break (DSB) repair. Component of a FANCM-MHF complex which promotes gene conversion at blocked replication forks, probably by reversal of the stalled fork. The protein is ATP-dependent DNA helicase MPH1 of Eremothecium gossypii (strain ATCC 10895 / CBS 109.51 / FGSC 9923 / NRRL Y-1056) (Yeast).